Consider the following 444-residue polypeptide: UDP-N-acetylmuramate--L-alanine ligase (444 aa).

110–116 provides a ligand contact to ATP; it reads GAHGKTS.

Belongs to the MurCDEF family.

The protein localises to the cytoplasm. The enzyme catalyses UDP-N-acetyl-alpha-D-muramate + L-alanine + ATP = UDP-N-acetyl-alpha-D-muramoyl-L-alanine + ADP + phosphate + H(+). It participates in cell wall biogenesis; peptidoglycan biosynthesis. Its function is as follows. Cell wall formation. The polypeptide is UDP-N-acetylmuramate--L-alanine ligase (Streptococcus pneumoniae (strain P1031)).